The following is a 535-amino-acid chain: uncharacterized protein (535 aa).

Transmembrane regions (helical) follow at residues 7 to 27 and 509 to 529; these read DFDV…AYLA and GGAV…ACLA.

It localises to the cell membrane. This is an uncharacterized protein from Mycobacterium bovis (strain ATCC BAA-935 / AF2122/97).